We begin with the raw amino-acid sequence, 869 residues long: TATA box-binding protein-associated factor RNA polymerase I subunit C (869 aa).

2 disordered regions span residues 605–629 and 729–869; these read SSLRRDAGPPGDTQPDCHAPTASWT and GAAW…RMGF. At T834 the chain carries Phosphothreonine. Residues 835 to 860 are compositionally biased toward polar residues; that stretch reads PPHSQASSVRATRSQQHTPVLSSSQP. Residue S848 is modified to Phosphoserine.

As to quaternary structure, component of the transcription factor SL1/TIF-IB complex, composed of TBP and at least TAF1A, TAF1B, TAF1C and TAF1D. In the complex interacts directly with TBP, TAF1A and TAF1B. Interaction of the SL1/TIF-IB subunits with TBP excludes interaction of TBP with the transcription factor IID (TFIID) subunits. Interacts with MYC and RRN3. Interacts with p53/TP53; the interaction prevents the association of SL1/TIF-IB with UBTF and represses RNA polymerase I transcription. Part of Pol I pre-initiation complex (PIC), in which Pol I core assembles with RRN3 and promoter-bound UTBF and SL1/TIF-IB complex.

The protein localises to the nucleus. Its subcellular location is the nucleolus. Functionally, component of the transcription factor SL1/TIF-IB complex, which is involved in the assembly of the PIC (pre-initiation complex) during RNA polymerase I-dependent transcription. The rate of PIC formation probably is primarily dependent on the rate of association of SL1/TIF-IB with the rDNA promoter. SL1/TIF-IB is involved in stabilization of nucleolar transcription factor 1/UBTF on rDNA. Formation of SL1/TIF-IB excludes the association of TBP with TFIID subunits. Recruits RNA polymerase I to the rRNA gene promoter via interaction with RRN3. The protein is TATA box-binding protein-associated factor RNA polymerase I subunit C (TAF1C) of Homo sapiens (Human).